We begin with the raw amino-acid sequence, 219 residues long: Carboxypeptidase Y inhibitor (219 aa).

At Met-1 the chain carries N-acetylmethionine.

This sequence belongs to the phosphatidylethanolamine-binding protein family. Monomer.

Its subcellular location is the cytoplasm. Specific and potent inhibitor of carboxypeptidase Y. This Saccharomyces cerevisiae (strain ATCC 204508 / S288c) (Baker's yeast) protein is Carboxypeptidase Y inhibitor (TFS1).